Consider the following 1736-residue polypeptide: Collagen alpha-2(XI) chain (1736 aa).

The N-terminal stretch at 1-27 (MERCSRCHRLLLFLPLVLGLSAAPGWA) is a signal peptide. Residues 57 to 228 (DVAYRVARPA…QSCGQKDLEC (172 aa)) form the Laminin G-like domain. Residues 215-486 (QAAYQSCGQK…ILQQARLALR (272 aa)) form a nonhelical region region. Disordered regions lie at residues 228–270 (CERE…PTES), 364–465 (LSAE…DKGP), and 485–1538 (LRGP…GSPA). Polar residues predominate over residues 258–269 (PQSQEPQKQPTE). Collagen-like domains lie at 399-447 (GPPG…GPPG), 487-545 (GPPG…ADGA), and 546-583 (RGMP…GLPG). A triple-helical region region spans residues 487-1500 (GPPGPMGYTG…PGHPGPPGEV (1014 aa)). The span at 497 to 533 (RPGPLGQPGSPGLKGESGDLGPQGPRGPQGLTGPPGK) shows a compositional bias: low complexity. A compositionally biased stretch (pro residues) spans 615–624 (KGPPGIPGPP). Low complexity predominate over residues 650–668 (QQGTPGAQGLPGPQGAIGP). The 56-residue stretch at 682-737 (GMPGSDGLPGHPGKEGPPGTKGNQGPSGPQGPLGYPGPRGVKGVDGIRGLKGHKGE) folds into the Collagen-like 4 domain. Positions 765-774 (RGEDGPEGPK) are enriched in basic and acidic residues. 2 stretches are compositionally biased toward low complexity: residues 776 to 789 (RTGP…TGLM) and 842 to 861 (PTGP…SGAK). 5 consecutive Collagen-like domains span residues 868–924 (GPHG…PGPP), 967–1025 (GDPG…AAGS), 1026–1055 (GGPI…EKGP), 1056–1086 (IGPT…DGDK), and 1114–1172 (GPVG…ETGD). Over residues 994–1003 (GTAGGPGLKG) the composition is skewed to gly residues. The span at 1029–1040 (IGPPGRPGPQGP) shows a compositional bias: pro residues. 2 stretches are compositionally biased toward low complexity: residues 1115–1133 (PVGQ…ARGP) and 1155–1164 (IGLQGLPGPS). A compositionally biased stretch (pro residues) spans 1176–1187 (MGPPGPPGPRGP). Positions 1188–1197 (AGPNGADGPQ) are enriched in low complexity. Residues 1198–1207 (GSPGGVGNLG) are compositionally biased toward gly residues. The span at 1217 to 1230 (ESGSPGVQGEPGVK) shows a compositional bias: low complexity. A compositionally biased stretch (basic and acidic residues) spans 1232–1241 (PRGERGEKGE). Over residues 1256–1272 (PTGDNGPKGNPGPVGFP) the composition is skewed to low complexity. A compositionally biased stretch (basic and acidic residues) spans 1287–1296 (DGAKGDRGED). Residues 1376–1386 (QQGRPGATGQA) show a composition bias toward low complexity. 2 stretches are compositionally biased toward pro residues: residues 1388 to 1397 (PPGPVGPPGL) and 1457 to 1467 (PGGPPGLPGPS). 2 Collagen-like domains span residues 1393–1447 (GPPG…GETG) and 1448–1499 (IPGA…PPGE). The span at 1469-1481 (PKGAKGATGPAGP) shows a compositional bias: low complexity. The propeptide at 1501 to 1736 (IQPLPIQMPK…VLLGPVCFMG (236 aa)) is C-terminal propeptide. The region spanning 1541–1735 (EEIFGSLDSL…GVLLGPVCFM (195 aa)) is the Fibrillar collagen NC1 domain. C1571 and C1603 are joined by a disulfide. Ca(2+) contacts are provided by D1589, N1591, Q1592, C1594, and D1597. N1604 carries N-linked (GlcNAc...) asparagine glycosylation. Cystine bridges form between C1612–C1733 and C1655–C1689.

The protein belongs to the fibrillar collagen family. In terms of assembly, trimers composed of three different chains: alpha 1(XI), alpha 2(XI), and alpha 3(XI). Alpha 3(XI) is a post-translational modification of alpha 1(II). Alpha 1(V) can also be found instead of alpha 3(XI)=1(II). Prolines at the third position of the tripeptide repeating unit (G-X-Y) are hydroxylated in some or all of the chains.

The protein localises to the secreted. It is found in the extracellular space. The protein resides in the extracellular matrix. Its function is as follows. May play an important role in fibrillogenesis by controlling lateral growth of collagen II fibrils. The sequence is that of Collagen alpha-2(XI) chain (Col11a2) from Mus musculus (Mouse).